The chain runs to 174 residues: Peptide deformylase (174 aa).

Residues cysteine 96 and histidine 138 each coordinate Fe cation. Glutamate 139 is an active-site residue. Histidine 142 provides a ligand contact to Fe cation.

Belongs to the polypeptide deformylase family. Fe(2+) is required as a cofactor.

The catalysed reaction is N-terminal N-formyl-L-methionyl-[peptide] + H2O = N-terminal L-methionyl-[peptide] + formate. Its function is as follows. Removes the formyl group from the N-terminal Met of newly synthesized proteins. Requires at least a dipeptide for an efficient rate of reaction. N-terminal L-methionine is a prerequisite for activity but the enzyme has broad specificity at other positions. This is Peptide deformylase from Nautilia profundicola (strain ATCC BAA-1463 / DSM 18972 / AmH).